A 58-amino-acid polypeptide reads, in one-letter code: Large ribosomal subunit protein bL32c (58 aa).

Basic residues predominate over residues 1–19 (MAVPKKRKSKMKTRLRKAQ). The disordered stretch occupies residues 1-25 (MAVPKKRKSKMKTRLRKAQWKSEAS).

The protein belongs to the bacterial ribosomal protein bL32 family.

It is found in the plastid. It localises to the chloroplast. This Chlorella vulgaris (Green alga) protein is Large ribosomal subunit protein bL32c (rpl32).